The chain runs to 43 residues: Omega-ctenitoxin-Pr1a (43 aa).

Cystine bridges form between Cys2/Cys17, Cys9/Cys22, Cys16/Cys33, and Cys24/Cys31. A Glycine amide modification is found at Gly43.

In terms of tissue distribution, expressed by the venom gland.

The protein localises to the secreted. Functionally, inhibits high-voltage activated calcium channels. Shifts the voltage-dependence for activation towards hyperpolarized membrane potentials for L- (Cav1), P/Q- (Cav2.1/CACNA1A) and R-type (Cav2.3/CACNA1E) calcium currents. Causes immediate agitation and clockwise gyration, followed by the gradual development of general flaccid paralysis when injected intracerebroventricular into mice at dose levels of 5 ug per mouse. This Phoneutria reidyi (Brazilian Amazonian armed spider) protein is Omega-ctenitoxin-Pr1a.